The following is a 482-amino-acid chain: PHD finger protein At3g20280 (482 aa).

The PHD-type zinc finger occupies 45-97 (AMACQICEVTINEMDTLLICDACEKAYHLKCLQGNNMKGVPKSEWHCSRCVQA). Disordered regions lie at residues 188–210 (TNIGSQGSKENVACGANSPAPVS) and 314–482 (SSNS…ENAA). Over residues 314 to 324 (SSNSQQAVSHS) the composition is skewed to low complexity. 2 stretches are compositionally biased toward polar residues: residues 377-386 (ACQNHPTASP) and 393-428 (QDSTITAAPSVTQEDSAFNTEKTPPQPLSVSSNYDS). The segment covering 447–482 (DSEKGKGLNGLDDRHQEQPSEPEFYKSDSVKEENAA) has biased composition (basic and acidic residues).

This Arabidopsis thaliana (Mouse-ear cress) protein is PHD finger protein At3g20280.